We begin with the raw amino-acid sequence, 319 residues long: Acetyl-coenzyme A carboxylase carboxyl transferase subunit alpha (319 aa).

Residues 32–293 (NIQEEISRLQ…HTALAEALQT (262 aa)) enclose the CoA carboxyltransferase C-terminal domain.

This sequence belongs to the AccA family. As to quaternary structure, acetyl-CoA carboxylase is a heterohexamer composed of biotin carboxyl carrier protein (AccB), biotin carboxylase (AccC) and two subunits each of ACCase subunit alpha (AccA) and ACCase subunit beta (AccD).

Its subcellular location is the cytoplasm. The enzyme catalyses N(6)-carboxybiotinyl-L-lysyl-[protein] + acetyl-CoA = N(6)-biotinyl-L-lysyl-[protein] + malonyl-CoA. It participates in lipid metabolism; malonyl-CoA biosynthesis; malonyl-CoA from acetyl-CoA: step 1/1. In terms of biological role, component of the acetyl coenzyme A carboxylase (ACC) complex. First, biotin carboxylase catalyzes the carboxylation of biotin on its carrier protein (BCCP) and then the CO(2) group is transferred by the carboxyltransferase to acetyl-CoA to form malonyl-CoA. This Thioalkalivibrio sulfidiphilus (strain HL-EbGR7) protein is Acetyl-coenzyme A carboxylase carboxyl transferase subunit alpha.